The following is a 250-amino-acid chain: Small ribosomal subunit protein uS2 (250 aa).

It belongs to the universal ribosomal protein uS2 family.

In Marinobacter nauticus (strain ATCC 700491 / DSM 11845 / VT8) (Marinobacter aquaeolei), this protein is Small ribosomal subunit protein uS2.